A 246-amino-acid polypeptide reads, in one-letter code: ATP synthase subunit a, chloroplastic (246 aa).

5 consecutive transmembrane segments (helical) span residues 35 to 55 (GQVL…GLIA), 94 to 114 (VPFI…GALL), 132 to 152 (DINT…YAGI), 198 to 218 (LVVG…VMLL), and 219 to 239 (GVFT…AYIG).

This sequence belongs to the ATPase A chain family. As to quaternary structure, F-type ATPases have 2 components, CF(1) - the catalytic core - and CF(0) - the membrane proton channel. CF(1) has five subunits: alpha(3), beta(3), gamma(1), delta(1), epsilon(1). CF(0) has four main subunits: a, b, b' and c.

Its subcellular location is the plastid. The protein resides in the chloroplast thylakoid membrane. Its function is as follows. Key component of the proton channel; it plays a direct role in the translocation of protons across the membrane. This chain is ATP synthase subunit a, chloroplastic, found in Stigeoclonium helveticum (Green alga).